A 176-amino-acid polypeptide reads, in one-letter code: Translation initiation factor IF-3 (176 aa).

It belongs to the IF-3 family. Monomer.

The protein resides in the cytoplasm. IF-3 binds to the 30S ribosomal subunit and shifts the equilibrium between 70S ribosomes and their 50S and 30S subunits in favor of the free subunits, thus enhancing the availability of 30S subunits on which protein synthesis initiation begins. This is Translation initiation factor IF-3 from Streptococcus uberis (strain ATCC BAA-854 / 0140J).